A 30-amino-acid chain; its full sequence is Proteinase inhibitor CeKI (30 aa).

Belongs to the protease inhibitor I3 (leguminous Kunitz-type inhibitor) family.

Functionally, potent inhibitor of serine proteases plasma kallikrein, plasmin and coagulation factor XIIa. Weak inhibitor of serine proteases trypsin and coagulation factor Xa. Does not inhibit the serine proteases chymotrypsin, elastase or thrombin. Inhibits kinin release from HMW-kininogen by kallikrein in vitro. This Paubrasilia echinata (Pau Brasil) protein is Proteinase inhibitor CeKI.